The following is a 551-amino-acid chain: Protein ROOT HAIR SPECIFIC 17 (551 aa).

The chain crosses the membrane as a helical; Signal-anchor for type II membrane protein span at residues 39–59; it reads LFPLVSAVSGCLLLILFSFST. 2 N-linked (GlcNAc...) asparagine glycosylation sites follow: Asn109 and Asn153. Position 293 to 295 (293 to 295) interacts with substrate; the sequence is HLR. 2 N-linked (GlcNAc...) asparagine glycosylation sites follow: Asn405 and Asn465. Positions 515 to 539 are disordered; sequence KAKHVNEDDSSEYSEIGNVPISSRS.

It belongs to the glycosyltransferase GT106 family. In terms of tissue distribution, specifically expressed in the root hair.

The protein resides in the membrane. Its pathway is glycan metabolism. This Arabidopsis thaliana (Mouse-ear cress) protein is Protein ROOT HAIR SPECIFIC 17.